The sequence spans 539 residues: GMP synthase [glutamine-hydrolyzing] (539 aa).

A Glutamine amidotransferase type-1 domain is found at 4–202 (KILILDFGSQ…VLQIAGAKPD (199 aa)). C81 functions as the Nucleophile in the catalytic mechanism. Catalysis depends on residues H176 and E178. The GMPS ATP-PPase domain maps to 203–395 (WIMSNHIEEA…LGLPPEMVYR (193 aa)). 230 to 236 (SGGVDSS) provides a ligand contact to ATP.

In terms of assembly, homodimer.

It catalyses the reaction XMP + L-glutamine + ATP + H2O = GMP + L-glutamate + AMP + diphosphate + 2 H(+). It participates in purine metabolism; GMP biosynthesis; GMP from XMP (L-Gln route): step 1/1. In terms of biological role, catalyzes the synthesis of GMP from XMP. This chain is GMP synthase [glutamine-hydrolyzing], found in Burkholderia ambifaria (strain MC40-6).